A 230-amino-acid chain; its full sequence is Dickkopf-like protein 1 (230 aa).

A signal peptide spans 1 to 20 (MCRLRVLLLLLPLAFVSSSA). Residues N31, N87, and N102 are each glycosylated (N-linked (GlcNAc...) asparagine).

As to quaternary structure, interacts with SLXL1; Co-localize in seminiferous tubules. Interacts with SLY. In terms of processing, N-glycosylated during spermatogenesis. Not N-glycosylated in mature sperm. Testis-specific. Abundant in the seminiferous tubules where it is associated with developing spermatocytes. Expressed only in testis (at protein level). Not detectable on postnatal days 4 and 9 but after day 18 it gradually increased as the development of testes progressed. Expressed at high levels in testis and at weak levels in epididymis.

Its subcellular location is the secreted. The protein localises to the cytoplasmic vesicle. The protein resides in the secretory vesicle. It is found in the acrosome. Functionally, involved in fertilization by facilitating sperm penetration of the zona pellucida. May promote spermatocyte apoptosis, thereby limiting sperm production. In adults, may reduce testosterone synthesis in Leydig cells. Is not essential either for development or fertility. The polypeptide is Dickkopf-like protein 1 (Mus musculus (Mouse)).